The sequence spans 193 residues: Cbp/p300-interacting transactivator 1 (193 aa).

Disordered stretches follow at residues 1 to 26 (MPTTSRPALDVKGGTSPAKEDANQEM), 50 to 88 (VASNGTKASGAPTSSSGSPIGSPTTTPPTKPPSFNLHPA), and 106 to 147 (GMAA…SPAI). Low complexity predominate over residues 54–73 (GTKASGAPTSSSGSPIGSPT). Residues 158–167 (LMSLVVELGL) carry the Nuclear export signal motif.

This sequence belongs to the CITED family. In terms of assembly, interacts (via C-terminus) with CREBBP. Interacts with EGR2. Homodimer. Binds to RBM14. Interacts (via N-terminus) with HSPA8; the interaction suppresses the association of CITED1 with p300/CBP and SMAD-mediated transcription transactivation. Interacts (via C-terminus) with TOX3 (via HGM box); the interaction increases estrogen-response element (ERE)-dependent transcription and protection against cell death. Interacts with ESR1; the interaction occurs in a estrogen-dependent manner. Interacts (unphosphorylated form preferentially and via C-terminus) with EP300. Post-translationally, phosphorylated. Phosphorylation changes in a cell cycle-dependent manner and reduces its transcriptional coactivator activity. In terms of tissue distribution, expressed only in melanocytes and testis.

The protein localises to the nucleus. It is found in the cytoplasm. Its function is as follows. Transcriptional coactivator of the p300/CBP-mediated transcription complex. Enhances SMAD-mediated transcription by strengthening the functional link between the DNA-binding SMAD transcription factors and the p300/CBP transcription coactivator complex. Stimulates estrogen-dependent transactivation activity mediated by estrogen receptors signaling; stabilizes the interaction of estrogen receptor ESR1 and histone acetyltransferase EP300. Positively regulates TGF-beta signaling through its association with the SMAD/p300/CBP-mediated transcriptional coactivator complex. Induces transcription from estrogen-responsive promoters and protection against cell death. Potentiates EGR2-mediated transcriptional activation activity from the ERBB2 promoter. Acts as an inhibitor of osteoblastic mineralization through a cAMP-dependent parathyroid hormone receptor signaling. May play a role in pigmentation of melanocytes. Associates with chromatin to the estrogen-responsive TGF-alpha promoter region in a estrogen-dependent manner. The protein is Cbp/p300-interacting transactivator 1 (CITED1) of Homo sapiens (Human).